Consider the following 1187-residue polypeptide: Metabotropic glutamate receptor-like protein Q (1187 aa).

Over 1–735 the chain is Extracellular; that stretch reads MRLFFKFFYL…TIETSNIAKT (735 aa). N-linked (GlcNAc...) asparagine glycans are attached at residues asparagine 35, asparagine 44, asparagine 55, asparagine 177, asparagine 258, asparagine 275, asparagine 397, asparagine 402, asparagine 462, asparagine 526, asparagine 527, asparagine 557, asparagine 562, and asparagine 684. A helical transmembrane segment spans residues 736–756; that stretch reads VMIITTSILVLLILLCFGITI. Topologically, residues 757–768 are cytoplasmic; it reads AYSKEKVINFGN. Residues 769–789 traverse the membrane as a helical segment; it reads IVFLILMLFSCLFLCIIIYVS. The Extracellular portion of the chain corresponds to 790-796; the sequence is IEPTNFS. Residue asparagine 794 is glycosylated (N-linked (GlcNAc...) asparagine). Residues 797–817 traverse the membrane as a helical segment; the sequence is CQFSAIVFPIGIGILFTLTLL. The Cytoplasmic portion of the chain corresponds to 818–843; it reads KQYKIYKLFKYSDFLKINTDNLKMVK. The helical transmembrane segment at 844–864 threads the bilayer; sequence YAGLIMVPVFLLVLIGVIVYP. The Extracellular portion of the chain corresponds to 865–888; that stretch reads SKPTFILDLHTKTATKYCISRKYY. Residues 889 to 909 traverse the membrane as a helical segment; that stretch reads VFSIVIVVYEVIILLTSCFIA. At 910-925 the chain is on the cytoplasmic side; that stretch reads MKSKRYHSTPGTFYES. The chain crosses the membrane as a helical span at residues 926–946; the sequence is LFNSILIYNYTLVFIVLIPLF. Residues 947 to 955 lie on the Extracellular side of the membrane; sequence YTLQNNPTT. Residues 956–976 traverse the membrane as a helical segment; it reads IYLIYSIGSSILVFATLSIIF. Residues 977 to 1095 lie on the Cytoplasmic side of the membrane; that stretch reads IPKINFLFRR…SPSSQSIDFL (119 aa). Residues 1074-1105 are compositionally biased toward polar residues; the sequence is IYPNQIPKQTTNSPSSQSIDFLNNPTIPKNKS. Residues 1074-1187 form a disordered region; the sequence is IYPNQIPKQT…RKSMDPSLDS (114 aa). The segment covering 1114–1124 has biased composition (basic residues); sequence KKPKKKLKSKI. Residues 1125–1174 are compositionally biased toward low complexity; sequence ISKSANSSPNINNNTINNNNNNNNNNNNNNNNNNNNNNINNNNNNNININ.

It belongs to the G-protein coupled receptor 3 family. GABA-B receptor subfamily.

The protein resides in the membrane. In Dictyostelium discoideum (Social amoeba), this protein is Metabotropic glutamate receptor-like protein Q (grlQ).